An 86-amino-acid polypeptide reads, in one-letter code: Short neurotoxin homolog NTL4 (86 aa).

An N-terminal signal peptide occupies residues 1–21; sequence MKTLLLTLVVVTIICLDLGYT. Intrachain disulfides connect C24-C45, C38-C63, C67-C78, and C79-C84.

It belongs to the three-finger toxin family. Short-chain subfamily. Orphan group III sub-subfamily. In terms of tissue distribution, expressed by the venom gland.

The protein localises to the secreted. This chain is Short neurotoxin homolog NTL4, found in Bungarus multicinctus (Many-banded krait).